The primary structure comprises 621 residues: Chaperone protein HscA homolog (621 aa).

It belongs to the heat shock protein 70 family.

In terms of biological role, chaperone involved in the maturation of iron-sulfur cluster-containing proteins. Has a low intrinsic ATPase activity which is markedly stimulated by HscB. In Cupriavidus pinatubonensis (strain JMP 134 / LMG 1197) (Cupriavidus necator (strain JMP 134)), this protein is Chaperone protein HscA homolog.